A 139-amino-acid polypeptide reads, in one-letter code: NADPH-dependent 7-cyano-7-deazaguanine reductase (139 aa).

The active-site Thioimide intermediate is the cysteine 34. Catalysis depends on aspartate 41, which acts as the Proton donor. Substrate is bound by residues 56 to 58 (VEL) and 75 to 76 (HE).

Belongs to the GTP cyclohydrolase I family. QueF type 1 subfamily.

Its subcellular location is the cytoplasm. The catalysed reaction is 7-aminomethyl-7-carbaguanine + 2 NADP(+) = 7-cyano-7-deazaguanine + 2 NADPH + 3 H(+). The protein operates within tRNA modification; tRNA-queuosine biosynthesis. Catalyzes the NADPH-dependent reduction of 7-cyano-7-deazaguanine (preQ0) to 7-aminomethyl-7-deazaguanine (preQ1). This Methylobacillus flagellatus (strain ATCC 51484 / DSM 6875 / VKM B-1610 / KT) protein is NADPH-dependent 7-cyano-7-deazaguanine reductase.